Here is a 63-residue protein sequence, read N- to C-terminus: Beta-glucosidase A-3 (63 aa).

Aspartate 12 is a catalytic residue. Residues asparagine 48 and asparagine 56 are each glycosylated (N-linked (GlcNAc...) asparagine).

This sequence belongs to the glycosyl hydrolase 3 family.

The catalysed reaction is Hydrolysis of terminal, non-reducing beta-D-glucosyl residues with release of beta-D-glucose.. The protein operates within glycan metabolism; cellulose degradation. This Aspergillus wentii protein is Beta-glucosidase A-3.